A 607-amino-acid chain; its full sequence is Elongation factor 4 (607 aa).

The tr-type G domain maps to 11 to 193 (SRIRNFSIIA…QVVEKVPAPA (183 aa)). GTP-binding positions include 23-28 (DHGKST) and 140-143 (NKID).

This sequence belongs to the TRAFAC class translation factor GTPase superfamily. Classic translation factor GTPase family. LepA subfamily.

It is found in the cell membrane. It catalyses the reaction GTP + H2O = GDP + phosphate + H(+). Functionally, required for accurate and efficient protein synthesis under certain stress conditions. May act as a fidelity factor of the translation reaction, by catalyzing a one-codon backward translocation of tRNAs on improperly translocated ribosomes. Back-translocation proceeds from a post-translocation (POST) complex to a pre-translocation (PRE) complex, thus giving elongation factor G a second chance to translocate the tRNAs correctly. Binds to ribosomes in a GTP-dependent manner. This Shouchella clausii (strain KSM-K16) (Alkalihalobacillus clausii) protein is Elongation factor 4.